Here is a 197-residue protein sequence, read N- to C-terminus: 3-isopropylmalate dehydratase small subunit (197 aa).

The protein belongs to the LeuD family. LeuD type 1 subfamily. As to quaternary structure, heterodimer of LeuC and LeuD.

It carries out the reaction (2R,3S)-3-isopropylmalate = (2S)-2-isopropylmalate. It participates in amino-acid biosynthesis; L-leucine biosynthesis; L-leucine from 3-methyl-2-oxobutanoate: step 2/4. Functionally, catalyzes the isomerization between 2-isopropylmalate and 3-isopropylmalate, via the formation of 2-isopropylmaleate. This is 3-isopropylmalate dehydratase small subunit from Streptomyces griseus subsp. griseus (strain JCM 4626 / CBS 651.72 / NBRC 13350 / KCC S-0626 / ISP 5235).